A 149-amino-acid polypeptide reads, in one-letter code: Large ribosomal subunit protein bL9 (149 aa).

It belongs to the bacterial ribosomal protein bL9 family.

Functionally, binds to the 23S rRNA. This is Large ribosomal subunit protein bL9 from Xylella fastidiosa (strain 9a5c).